The primary structure comprises 425 residues: Glutamyl-tRNA(Gln) amidotransferase subunit D (425 aa).

The disordered stretch occupies residues 53–84 (ENNGEAANGGNGGKNGQKEPEPAKEKVSKPGL). Residues 68–80 (GQKEPEPAKEKVS) show a composition bias toward basic and acidic residues. Residues 85–414 (PKVSILSTGG…EKAVSMLGEN (330 aa)) enclose the Asparaginase/glutaminase domain. Residues threonine 95, threonine 171, aspartate 172, and lysine 248 contribute to the active site.

The protein belongs to the asparaginase 1 family. GatD subfamily. In terms of assembly, heterodimer of GatD and GatE.

It carries out the reaction L-glutamyl-tRNA(Gln) + L-glutamine + ATP + H2O = L-glutaminyl-tRNA(Gln) + L-glutamate + ADP + phosphate + H(+). Its function is as follows. Allows the formation of correctly charged Gln-tRNA(Gln) through the transamidation of misacylated Glu-tRNA(Gln) in organisms which lack glutaminyl-tRNA synthetase. The reaction takes place in the presence of glutamine and ATP through an activated gamma-phospho-Glu-tRNA(Gln). The GatDE system is specific for glutamate and does not act on aspartate. The protein is Glutamyl-tRNA(Gln) amidotransferase subunit D of Methanosarcina mazei (strain ATCC BAA-159 / DSM 3647 / Goe1 / Go1 / JCM 11833 / OCM 88) (Methanosarcina frisia).